Here is an 853-residue protein sequence, read N- to C-terminus: MAAPAEAEVAAAPGLTEAAEAAELTRALSRLLPGLETESKLGRRRALEALEQVLEEAVRPGADSAAFQGPWARLLLPRLLRLLSDPAEGCRALAAHLLDLGLRRAARPRDALPRLLPALSARLARPELARPPPEPCEELRLALVQLLHLAVDLGGAALAPHLDDAVRALRAALLDPFAAVRREGCECAAALARATPEHFHMQSESLIGPLMQTISHQHWKVRVAVIEATGTVIQFGSGNSVDDVLSHFAQRLFDDVPQVRQAVTSVVGGWLLNLRDRYSFLHKLTPLLLSSFSDEMPEIRQTATSLWEKVGLQWQQENEADLKDKLDFASPPPPNYPEHESRPGLGCRELVFRNLSKVLPAICHDITDWVVGTRVKAAQLLPVLLLHAEDHITQHLEIVLRTLHQACTDEEKAVVGSCIRAAELIGTFVSPEVFLKLILAMLKKAPSASGLLILASVIRGCPRNALQPHVTVIATELAQEHICQGSENNLYLEHLLLCVQALLSVCQEDCRAASLQFLEVLVTIMAVSDAVGLEKKAQKTMDTLAEVEDIPSSQDLYRKHVGALLERLTASHGEWAVHSVQLLKFTVLLTQAGPAVGEALQHVIPTLRACLQPSTDPHMRLKLFSILSMMLLRPKDTVDSQGQFRGYLDMVINDILAPNLQWHAGRTAAAIRTAAISCLWALISSDILSAKQVQEAQETLMPQVLATLEDDSQTTRLMSCRIINMFLKNSGDTMEPEKFLKVYPELLKRLDDVSNDVRMAAASALLTWLKCIESLDGKSAYQSSVQFLYRELLVHLDDPESAIQDTVLEVLKEGSVLFPDVLVRETEAVVHKHRSATYCEQLLQHMQTMAAAR.

Ala2 is modified (N-acetylalanine). 9 HEAT repeats span residues 69–107, 200–238, 240–276, 278–316, 374–412, 597–636, 694–732, 736–774, and 782–820; these read GPWA…RAAR, HMQS…FGSG, SVDD…NLRD, YSFL…QWQQ, RVKA…DEEK, GEAL…RPKD, QEAQ…NSGD, PEKF…CIES, and QSSV…LFPD.

The protein belongs to the DNAAF5 family. As to quaternary structure, interacts with DNAI2; probably involved in outer arm dynein assembly. In terms of tissue distribution, expressed in ciliated cells including ependymal cells lining the lateral ventricles and multiciliated epithelium of oviduct ampulla.

Its subcellular location is the cytoplasm. It localises to the cytoplasmic granule. In terms of biological role, cytoplasmic protein involved in the delivery of the dynein machinery to the motile cilium. It is required for the assembly of the axonemal dynein inner and outer arms, two structures attached to the peripheral outer doublet A microtubule of the axoneme, that play a crucial role in cilium motility. This Mus musculus (Mouse) protein is Dynein axonemal assembly factor 5.